The following is a 329-amino-acid chain: NAD(+) hydrolase TcpA (329 aa).

An MPN domain is found at 5–134 (VSISYLALEQ…ADCVRFYTVR (130 aa)). One can recognise a TIR domain in the interval 192–324 (FEYDVFICHA…YVVNEILRVL (133 aa)). Residues 201-202 (AH) and Ser231 contribute to the NAD(+) site. Glu267 is an active-site residue.

It carries out the reaction NAD(+) + H2O = ADP-D-ribose + nicotinamide + H(+). Functionally, NAD(+) hydrolase (NADase) that catalyzes cleavage of NAD(+) into ADP-D-ribose (ADPR) and nicotinamide. This Theionarchaea archaeon (strain DG-70-1) protein is NAD(+) hydrolase TcpA.